The sequence spans 220 residues: Early protein OPG038 (220 aa).

The first 17 residues, 1–17 (MVYKLVLLFCIASLGYS), serve as a signal peptide directing secretion.

This sequence belongs to the orthopoxvirus OPG038 family. In terms of assembly, homooligomer. Interacts with host CD80 and CD86 when secreted. Glycosylated by host.

It localises to the host endoplasmic reticulum. The protein resides in the secreted. Its function is as follows. Plays a role in immune evasion. When secreted, inhibits T-cell activation by preventing the binding of host CD80 and CD86 to soluble CTLA4 and CD28. In the infected cell, may inhibits host NF kappa B activation. In Homo sapiens (Human), this protein is Early protein OPG038 (OPG038).